A 152-amino-acid polypeptide reads, in one-letter code: UPF0756 membrane protein JDM1_1594 (152 aa).

4 consecutive transmembrane segments (helical) span residues Ala-25–Ile-45, Trp-52–Phe-72, Trp-85–Leu-105, and Leu-115–Ile-135.

The protein belongs to the UPF0756 family.

The protein localises to the cell membrane. This Lactiplantibacillus plantarum (strain JDM1) (Lactobacillus plantarum) protein is UPF0756 membrane protein JDM1_1594.